The sequence spans 233 residues: Large ribosomal subunit protein uL3 (233 aa).

Positions 145-172 (FGSQRASHGNSRSHRVPGSIGQAQDPGR) are disordered. Q168 carries the N5-methylglutamine modification.

The protein belongs to the universal ribosomal protein uL3 family. Part of the 50S ribosomal subunit. Forms a cluster with proteins L14 and L19. Methylated by PrmB.

One of the primary rRNA binding proteins, it binds directly near the 3'-end of the 23S rRNA, where it nucleates assembly of the 50S subunit. The polypeptide is Large ribosomal subunit protein uL3 (Bordetella petrii (strain ATCC BAA-461 / DSM 12804 / CCUG 43448)).